A 459-amino-acid chain; its full sequence is MVAFKFLLALSLSLLVSAAIAQTREPRLTQGQQCRFQRISGAQPSLRIQSEGGTTELWDERQEQFQCAGIVAMRSTIRPNGLSLPNYHPSPRLVYIERGQGLISIMVPGCAETYQVHRSQRTMERTEASEQQDRGSVRDLHQKVHRLRQGDIVAIPSGAAHWCYNDGSEDLVAVSINDVNHLSNQLDQKFRAFYLAGGVPRSGEQEQQARQTFHNIFRAFDAELLSEAFNVPQETIRRMQSEEEERGLIVMARERMTFVRPDEEEGEQEHRGRQLDNGLEETFCTMKFRTNVESRREADIFSRQAGRVHVVDRNKLPILKYMDLSAEKGNLYSNALVSPDWSMTGHTIVYVTRGDAQVQVVDHNGQALMNDRVNQGEMFVVPQYYTSTARAGNNGFEWVAFKTTGSPMRSPLAGYTSVIRAMPLQVITNSYQISPNQAQALKMNRGSQSFLLSPGGRRS.

An N-terminal signal peptide occupies residues 1–21 (MVAFKFLLALSLSLLVSAAIA). 2 disulfide bridges follow: Cys34-Cys67 and Cys110-Cys284. Cupin type-1 domains follow at residues 37 to 237 (QRIS…ETIR) and 290 to 439 (TNVE…NQAQ). The segment at 118–139 (RSQRTMERTEASEQQDRGSVRD) is disordered. Over residues 121-139 (RTMERTEASEQQDRGSVRD) the composition is skewed to basic and acidic residues.

It belongs to the 11S seed storage protein (globulins) family. In terms of assembly, homohexamer. Each subunit is composed of an acidic and a basic chain derived from a single precursor and linked by a disulfide bond. As to expression, expressed in seeds (at protein level). Expressed in seeds.

Functionally, seed storage protein. The chain is 11S globulin seed storage protein 2 from Sesamum indicum (Oriental sesame).